Consider the following 960-residue polypeptide: MWRLRRAAVACEVCQSLVKHSSGIKGSLPLQKLHLVSRSIYHSHYPTLKLQRPQLRTSFQQFSSLTNLPLRKLKFSPIKYGYQPRRNFWPARLATRLLKLRYLILGSAVGGGYTAKKTFDQWKDMIPDLSEYKWIVPDIVWEIDEYIDFEKIRKALPNSEDLVKLAPDFDKIVESLSLLKDFFTSGSPGETAFRATDHGSESDKHFRKVSDKEKIDQLQEELLHTQLKYQRILERLEKENKELRKLVLQKDDKGIHHRKLKKSLIDMYSEVLDVLSDYDASYNTQDHLPRVVVVGDQSAGKTSVLEMIAQARIFPRGSGEMMTRSPVKVTLSEGPHHVALFKDSSREFDLTKEEDLAALRHEIELRMRKNVKEGCTVSPETISLNVKGPGLQRMVLVDLPGVINTVTSGMAPDTKETIFSISKAYMQNPNAIILCIQDGSVDAERSIVTDLVSQMDPHGRRTIFVLTKVDLAEKNVASPSRIQQIIEGKLFPMKALGYFAVVTGKGNSSESIEAIREYEEEFFQNSKLLKTSMLKAHQVTTRNLSLAVSDCFWKMVRESVEQQADSFKATRFNLETEWKNNYPRLRELDRNELFEKAKNEILDEVISLSQATPKHWEEILQQSLWERVSTHVIENIYLPAAQTMNSGTFNTTVDIKLKQWTDKQLPNKAVEVAWETLQGEFSRFMTEPKGKEHDDIFDKLKEAVKEESIKRHKWNDFAEDSLRVIQHNALEDRSISDKQQWDAAIYFMEEALQARLKDTENAIENMVGPDWKKRWLYWKNRTQEQCVHNETKNELEKMLKCNEEHPAYLASDEITTVRKNLESRGVEVDPSLIKDTWHQVYRRHFLKTALNHCNLCRRGFYYYQRHFVDSELECNDVVLFWRIQRMLAITANTLRQQLTNTEVRRLEKNVKEVLEDFAEDGEKKIKLLTGKRVQLAEDLKKVREIQEKLDAFIEALHQEK.

The N-terminal 87 residues, methionine 1–asparagine 87, are a transit peptide targeting the mitochondrion. Topologically, residues phenylalanine 88–arginine 96 are mitochondrial matrix. Residues leucine 97–tyrosine 113 traverse the membrane as a helical segment. The Mitochondrial intermembrane portion of the chain corresponds to threonine 114 to aspartate 770. Residues serine 210–glycine 254 adopt a coiled-coil conformation. Lysine 228 is subject to N6-acetyllysine. The Dynamin-type G domain occupies glutamine 285 to glutamate 561. The interval glycine 295 to threonine 302 is G1 motif. The GTP site is built by serine 298, glycine 300, lysine 301, threonine 302, serine 303, and glycine 317. Residue threonine 302 participates in Mg(2+) binding. A G2 motif region spans residues methionine 321–arginine 324. Mg(2+) contacts are provided by threonine 323 and aspartate 398. The segment at aspartate 398–glycine 401 is G3 motif. The G4 motif stretch occupies residues threonine 467–aspartate 470. GTP contacts are provided by lysine 468, aspartate 470, and threonine 503. A G5 motif region spans residues valine 501–glycine 504. 2 stalk region regions span residues aspartate 589 to threonine 836 and cysteine 874 to leucine 928. Positions serine 736 to cysteine 856 are paddle region. The stretch at tryptophan 771–arginine 781 is an intramembrane region. Residues threonine 782 to lysine 960 lie on the Mitochondrial intermembrane side of the membrane. A disulfide bridge connects residues cysteine 856 and cysteine 874. The stretch at arginine 895 to lysine 960 forms a coiled coil.

Belongs to the TRAFAC class dynamin-like GTPase superfamily. Dynamin/Fzo/YdjA family. In terms of assembly, oligomeric complex consisting of membrane-bound and soluble forms of OPA1. Interacts with RCC1L; RCC1L acts as a guanine nucleotide exchange factor (GEF) for OPA1 by exchanging bound GDP for free GTP. Interacts with CHCHD3 and IMMT; these interactions occur preferentially with soluble OPA1 forms. Interacts with PRELID1. Post-translationally, cleaved by OMA1 or YME1L downstream of the transmembrane region in response to different signals to generate soluble forms. Cleaved by OMA1 at position S1 following stress conditions, generating the short soluble form (Dynamin-like GTPase OPA1, short form; S-OPA1). AFG3L2 is involved in the regulation of OMA1-dependent processing of OPA1. PARL-dependent proteolytic processing releases an antiapoptotic soluble form not required for mitochondrial fusion.

The protein localises to the mitochondrion inner membrane. It is found in the mitochondrion intermembrane space. It catalyses the reaction GTP + H2O = GDP + phosphate + H(+). Its activity is regulated as follows. Activated by guanine nucleotide exchange factor RCC1L. Functionally, dynamin-related GTPase that is essential for normal mitochondrial morphology by mediating fusion of the mitochondrial inner membranes, regulating cristae morphology and maintaining respiratory chain function. Exists in two forms: the transmembrane, long form (Dynamin-like GTPase OPA1, long form; L-OPA1), which is tethered to the inner mitochondrial membrane, and the short soluble form (Dynamin-like GTPase OPA1, short form; S-OPA1), which results from proteolytic cleavage and localizes in the intermembrane space. Both forms (L-OPA1 and S-OPA1) cooperate to catalyze the fusion of the mitochondrial inner membrane. The equilibrium between L-OPA1 and S-OPA1 is essential: excess levels of S-OPA1, produced by cleavage by OMA1 following loss of mitochondrial membrane potential, lead to an impaired equilibrium between L-OPA1 and S-OPA1, inhibiting mitochondrial fusion. The balance between L-OPA1 and S-OPA1 also influences cristae shape and morphology. Involved in remodeling cristae and the release of cytochrome c during apoptosis. Proteolytic processing by PARL in response to intrinsic apoptotic signals may lead to disassembly of OPA1 oligomers and release of the caspase activator cytochrome C (CYCS) into the mitochondrial intermembrane space. Acts as a regulator of T-helper Th17 cells, which are characterized by cells with fused mitochondria with tight cristae, by mediating mitochondrial membrane remodeling: OPA1 is required for interleukin-17 (IL-17) production. Its role in mitochondrial morphology is required for mitochondrial genome maintenance. In terms of biological role, constitutes the transmembrane long form (L-OPA1) that plays a central role in mitochondrial inner membrane fusion and cristae morphology. L-OPA1 and the soluble short form (S-OPA1) form higher-order helical assemblies that coordinate the fusion of mitochondrial inner membranes. Inner membrane-anchored L-OPA1 molecules initiate membrane remodeling by recruiting soluble S-OPA1 to rapidly polymerize into a flexible cylindrical scaffold encaging the mitochondrial inner membrane. Once at the membrane surface, the formation of S-OPA1 helices induce bilayer curvature. OPA1 dimerization through the paddle region, which inserts into cardiolipin-containing membrane, promotes GTP hydrolysis and the helical assembly of a flexible OPA1 lattice on the membrane, which drives membrane curvature and mitochondrial fusion. Plays a role in the maintenance and remodeling of mitochondrial cristae, some invaginations of the mitochondrial inner membrane that provide an increase in the surface area. Probably acts by forming helical filaments at the inside of inner membrane tubes with the shape and dimensions of crista junctions. The equilibrium between L-OPA1 and S-OPA1 influences cristae shape and morphology: increased L-OPA1 levels promote cristae stacking and elongated mitochondria, while increased S-OPA1 levels correlated with irregular cristae packing and round mitochondria shape. Constitutes the soluble short form (S-OPA1) generated by cleavage by OMA1, which plays a central role in mitochondrial inner membrane fusion and cristae morphology. The transmembrane long form (L-OPA1) and the S-OPA1 form higher-order helical assemblies that coordinate the fusion of mitochondrial inner membranes. Inner membrane-anchored L-OPA1 molecules initiate membrane remodeling by recruiting soluble S-OPA1 to rapidly polymerize into a flexible cylindrical scaffold encaging the mitochondrial inner membrane. Once at the membrane surface, the formation of S-OPA1 helices induce bilayer curvature. OPA1 dimerization through the paddle region, which inserts into cardiolipin-containing membrane, promotes GTP hydrolysis and the helical assembly of a flexible OPA1 lattice on the membrane, which drives membrane curvature and mitochondrial fusion. Excess levels of S-OPA1 produced by cleavage by OMA1 following stress conditions that induce loss of mitochondrial membrane potential, lead to an impaired equilibrium between L-OPA1 and S-OPA1, thereby inhibiting mitochondrial fusion. Involved in mitochondrial safeguard in response to transient mitochondrial membrane depolarization by mediating flickering: cleavage by OMA1 leads to excess production of S-OPA1, preventing mitochondrial hyperfusion. Plays a role in the maintenance and remodeling of mitochondrial cristae, some invaginations of the mitochondrial inner membrane that provide an increase in the surface area. Probably acts by forming helical filaments at the inside of inner membrane tubes with the shape and dimensions of crista junctions. The equilibrium between L-OPA1 and S-OPA1 influences cristae shape and morphology: increased L-OPA1 levels promote cristae stacking and elongated mitochondria, while increased S-OPA1 levels correlated with irregular cristae packing and round mitochondria shape. The chain is Dynamin-like GTPase OPA1, mitochondrial from Pongo abelii (Sumatran orangutan).